Reading from the N-terminus, the 159-residue chain is Growth arrest and DNA damage-inducible protein GADD45 gamma (159 aa).

Residues 43-86 (VYESAKVLNVDPDNVTFCVLAADEEDEGDIALQIHFTLIQAFCC) are homodimerization.

Belongs to the GADD45 family. Undergoes concentration-dependent homodimerization, which is required for growth inhibititory activity and enhances interaction with PCNA. Interacts with GADD45GIP1. Interacts with PCNA.

Functionally, involved in the regulation of growth and apoptosis. Mediates activation of stress-responsive MTK1/MEKK4 MAPKKK. The polypeptide is Growth arrest and DNA damage-inducible protein GADD45 gamma (Gadd45g) (Mus musculus (Mouse)).